The chain runs to 468 residues: Argininosuccinate lyase (468 aa).

This sequence belongs to the lyase 1 family. Argininosuccinate lyase subfamily.

It is found in the cytoplasm. It carries out the reaction 2-(N(omega)-L-arginino)succinate = fumarate + L-arginine. It participates in amino-acid biosynthesis; L-arginine biosynthesis; L-arginine from L-ornithine and carbamoyl phosphate: step 3/3. The sequence is that of Argininosuccinate lyase from Methanothermobacter thermautotrophicus (strain ATCC 29096 / DSM 1053 / JCM 10044 / NBRC 100330 / Delta H) (Methanobacterium thermoautotrophicum).